Reading from the N-terminus, the 188-residue chain is Urease accessory protein UreE (188 aa).

The interval 142–174 is disordered; sequence AYQSQAGAGHHHHHDHDHGHSHDHSHTHSHADS. Residues 157 to 172 show a composition bias toward basic and acidic residues; that stretch reads HDHGHSHDHSHTHSHA.

The protein belongs to the UreE family.

It localises to the cytoplasm. Functionally, involved in urease metallocenter assembly. Binds nickel. Probably functions as a nickel donor during metallocenter assembly. The protein is Urease accessory protein UreE of Tolumonas auensis (strain DSM 9187 / NBRC 110442 / TA 4).